A 268-amino-acid chain; its full sequence is MSNLPRDLSDLPRNMAEEVLSRVPMTSLRRLRFTCKKWNTLSRCRSFAKKHLVCQAKVAAKKREYKVVMMMDFRVYLMRINLQNNVELCIKRERELLFPDASDQIYVRHVFHCDGLLLCIMKDNPRLVVCNPYSGQTRWIETTNNPQRLDAYSYALGYNSSTKSHKILSFGMMFDYVSSTSAEFKIYDFNSDSWRLAVLFQRMDTLQMEIWVTTKIEPNTVSWSSKFFLSVDMRELTGRYSMFSFSDASFFIDEEKKVAVVFDKGKKK.

In terms of domain architecture, F-box spans 5–51 (PRDLSDLPRNMAEEVLSRVPMTSLRRLRFTCKKWNTLSRCRSFAKKH).

This Arabidopsis thaliana (Mouse-ear cress) protein is Putative F-box protein At3g23420.